Reading from the N-terminus, the 1101-residue chain is Protein unc-13 homolog (1101 aa).

One can recognise an MHD1 domain in the interval 663–804 (VSVFPAADSL…ASKDDLVPPV (142 aa)). Residues 941 to 1051 (QSRLEGLIEA…YETRELIDDL (111 aa)) enclose the MHD2 domain.

Belongs to the unc-13 family. Expressed in roots, cotyledons, leaves, stems and flowers. Expressed in guard cells and mesophyll cells of leaves.

The protein localises to the cytoplasm. It localises to the cell membrane. In terms of biological role, controls the tethering of the proton ATPase AHA1 to the plasma membrane. Is essential for stomatal opening in response to low concentration of carbon dioxide and light. In Arabidopsis thaliana (Mouse-ear cress), this protein is Protein unc-13 homolog.